A 344-amino-acid chain; its full sequence is Fibronectin type 3 and ankyrin repeat domains 1 protein (344 aa).

Residues 11-108 enclose the Fibronectin type-III domain; that stretch reads KPHPPVVGKV…VVSVATTREP (98 aa). ANK repeat units lie at residues 109–139, 143–172, 176–205, 209–238, 243–273, and 277–306; these read ISSEHFHRAVSVNDEDLLLRILEGGHVMIDV, FGFTALMVAAQKGYTRLVKILVSNGTDVNL, SGKDSLMLACYAGHLDVVKYLRRHGASWEA, GGCTALHWAADGGHCSVIDWMIKDGCEVDV, SGWTPLMRVSAVTGSQKVASLLIEAGADVNI, and DGKTPLMVAVLNNHEQLVQLLLDKGADATV.

As to quaternary structure, interacts with COPS5; regulates the phosphorylation of JUN and the transcriptional activity of AP-1. Interacts with RYBP; may prevent the ubiquitin-mediated proteasomal degradation of FANK1. In terms of processing, polyubiquitinated. Polyubiquitination leads to proteasomal degradation. In terms of tissue distribution, mostly restricted to testis (at protein level), including mid to late pachytene spermatocytes (stages VI-X), diplotene spermatocytes (stage XI), meiotically dividing spermatocytes (stage XII) and spermatids in steps 1-14. Highest levels in late pachytene spermatocytes and spermatids in steps 1-9.

It is found in the nucleus. The protein resides in the cytoplasm. It localises to the cytosol. The protein localises to the cytoskeleton. Its subcellular location is the cilium basal body. It is found in the cell projection. The protein resides in the cilium. Its function is as follows. Through the activation of JUN and AP-1-mediated transcription, may regulate apoptosis. The polypeptide is Fibronectin type 3 and ankyrin repeat domains 1 protein (Mus musculus (Mouse)).